The primary structure comprises 728 residues: LPS-assembly protein LptD (728 aa).

Residues 1-21 form the signal peptide; that stretch reads MSALPGFTLAALLLNVSLAEA.

This sequence belongs to the LptD family. Component of the lipopolysaccharide transport and assembly complex. Interacts with LptE and LptA.

The protein resides in the cell outer membrane. Functionally, together with LptE, is involved in the assembly of lipopolysaccharide (LPS) at the surface of the outer membrane. This Thiobacillus denitrificans (strain ATCC 25259 / T1) protein is LPS-assembly protein LptD.